The following is a 315-amino-acid chain: D-alanine--D-alanine ligase (315 aa).

Residues Lys101 to Glu297 enclose the ATP-grasp domain. Lys128 to His181 is a binding site for ATP. 3 residues coordinate Mg(2+): Asp249, Glu263, and Asn265.

It belongs to the D-alanine--D-alanine ligase family. The cofactor is Mg(2+). Mn(2+) is required as a cofactor.

It localises to the cytoplasm. It catalyses the reaction 2 D-alanine + ATP = D-alanyl-D-alanine + ADP + phosphate + H(+). It functions in the pathway cell wall biogenesis; peptidoglycan biosynthesis. In terms of biological role, cell wall formation. The polypeptide is D-alanine--D-alanine ligase (Wolbachia pipientis wMel).